The chain runs to 406 residues: Probable tRNA sulfurtransferase (406 aa).

The THUMP domain maps to 62-167 (AEVSNRLTKV…QDATYLSFED (106 aa)). ATP is bound by residues 185–186 (ML), 210–211 (HF), arginine 267, glycine 289, and glutamine 298.

The protein belongs to the ThiI family.

It is found in the cytoplasm. It carries out the reaction [ThiI sulfur-carrier protein]-S-sulfanyl-L-cysteine + a uridine in tRNA + 2 reduced [2Fe-2S]-[ferredoxin] + ATP + H(+) = [ThiI sulfur-carrier protein]-L-cysteine + a 4-thiouridine in tRNA + 2 oxidized [2Fe-2S]-[ferredoxin] + AMP + diphosphate. The catalysed reaction is [ThiS sulfur-carrier protein]-C-terminal Gly-Gly-AMP + S-sulfanyl-L-cysteinyl-[cysteine desulfurase] + AH2 = [ThiS sulfur-carrier protein]-C-terminal-Gly-aminoethanethioate + L-cysteinyl-[cysteine desulfurase] + A + AMP + 2 H(+). Its pathway is cofactor biosynthesis; thiamine diphosphate biosynthesis. Catalyzes the ATP-dependent transfer of a sulfur to tRNA to produce 4-thiouridine in position 8 of tRNAs, which functions as a near-UV photosensor. Also catalyzes the transfer of sulfur to the sulfur carrier protein ThiS, forming ThiS-thiocarboxylate. This is a step in the synthesis of thiazole, in the thiamine biosynthesis pathway. The sulfur is donated as persulfide by IscS. The polypeptide is Probable tRNA sulfurtransferase (Lactococcus lactis subsp. cremoris (strain MG1363)).